The sequence spans 294 residues: StAR-related lipid transfer protein 3 (294 aa).

In terms of domain architecture, MENTAL spans 1 to 66 (DGYICNNGMD…YSPPESLAGS (66 aa)). Residues 55–61 (QFYSPPE) carry the FFAT motif. The segment at 58 to 77 (SPPESLAGSEEDLDEEGLGR) is disordered. The START domain maps to 79–292 (AVSPQEKALV…LRQRIRDLRS (214 aa)).

This sequence belongs to the STARD3 family. In terms of assembly, homodimer. Phosphorylated. Phosphorylation allows the tethering of two membranes that participates in the formation of ER-endosome contacts. Phosphorylation of FFAT motif drives membrane tethering between the endoplasmic reticulum and late endosomes that in turn allows the efficient transport of sterol mediated by the START domain.

The protein localises to the late endosome membrane. It carries out the reaction cholesterol(in) = cholesterol(out). In terms of biological role, sterol-binding protein that mediates cholesterol transport from the endoplasmic reticulum to endosomes. The sterol transport mechanism is triggered by phosphorylation of FFAT motif that leads to membrane tethering between the endoplasmic reticulum and late endosomes. Acts as a lipid transfer protein that redirects sterol to the endosome at the expense of the cell membrane and favors membrane formation inside endosomes. The polypeptide is StAR-related lipid transfer protein 3 (Salvelinus fontinalis (Brook trout)).